Here is a 122-residue protein sequence, read N- to C-terminus: uncharacterized protein (122 aa).

The Cytoplasmic segment spans residues 1–24 (MKNRKFSNLLLLRLRILCFNKKPA). Residues 25 to 45 (FAATSYAFFFRNFSVLIFIMV) traverse the membrane as a helical segment. Residues 46–57 (PDEKENGAAADN) lie on the Extracellular side of the membrane. A helical membrane pass occupies residues 58–78 (SFSLLIGRGVVLFLFYCPTAL). At 79 to 122 (KMHGPVPAHWFCDKNIEAIQSDGQIRLLRSGPFPWSHGTCIRGA) the chain is on the cytoplasmic side.

The protein resides in the membrane. This is an uncharacterized protein from Saccharomyces cerevisiae (strain ATCC 204508 / S288c) (Baker's yeast).